We begin with the raw amino-acid sequence, 531 residues long: Calcium-dependent protein kinase 21 (531 aa).

Over residues 1-10 (MGCFSSKHRK) the composition is skewed to basic residues. Residues 1 to 62 (MGCFSSKHRK…STPSSNPVSV (62 aa)) are disordered. Gly2 is lipidated: N-myristoyl glycine. Polar residues predominate over residues 48 to 60 (IHQQISTPSSNPV). Positions 80–338 (YSLGKELGRG…AAQVLEHPWI (259 aa)) constitute a Protein kinase domain. ATP contacts are provided by residues 86-94 (LGRGQFGIT) and Lys109. Residue Asp204 is the Proton acceptor of the active site. Position 244 is a phosphoserine (Ser244). The segment at 343 to 373 (APDKPIDSAVLSRMKQFRAMNKLKKLALKVI) is autoinhibitory domain. EF-hand domains are found at residues 380 to 415 (EEIK…LGSR), 416 to 451 (LSET…RYKL), 452 to 487 (DRDE…YGMG), and 488 to 522 (DEAS…GSTQ). Ca(2+) contacts are provided by Asp393, Asp395, Ser397, Thr399, Glu404, Asp429, Asp431, Asn433, Thr435, Glu440, Asp465, Asp467, Ser469, His471, Glu476, Asp500, Asp502, Asp504, Arg506, and Glu511.

This sequence belongs to the protein kinase superfamily. Ser/Thr protein kinase family. CDPK subfamily. As to quaternary structure, interacts with SLAC1 and ABI1.

The protein resides in the cell membrane. The enzyme catalyses L-seryl-[protein] + ATP = O-phospho-L-seryl-[protein] + ADP + H(+). It catalyses the reaction L-threonyl-[protein] + ATP = O-phospho-L-threonyl-[protein] + ADP + H(+). Its activity is regulated as follows. Activated by calcium. Autophosphorylation may play an important role in the regulation of the kinase activity. May play a role in signal transduction pathways that involve calcium as a second messenger. Mediates the phosphorylation and activation of the S-type anion efflux channel SLAC1. This Arabidopsis thaliana (Mouse-ear cress) protein is Calcium-dependent protein kinase 21 (CPK21).